Here is a 200-residue protein sequence, read N- to C-terminus: LexA repressor (200 aa).

A DNA-binding region (H-T-H motif) is located at residues Val27–Lys47. Residues Ser124 and Lys161 each act as for autocatalytic cleavage activity in the active site.

Belongs to the peptidase S24 family. Homodimer.

It catalyses the reaction Hydrolysis of Ala-|-Gly bond in repressor LexA.. Functionally, represses a number of genes involved in the response to DNA damage (SOS response), including recA and lexA. In the presence of single-stranded DNA, RecA interacts with LexA causing an autocatalytic cleavage which disrupts the DNA-binding part of LexA, leading to derepression of the SOS regulon and eventually DNA repair. This chain is LexA repressor, found in Clostridium tetani (strain Massachusetts / E88).